We begin with the raw amino-acid sequence, 388 residues long: S-adenosylmethionine synthase (388 aa).

Position 16 (His-16) interacts with ATP. Mg(2+) is bound at residue Asp-18. Position 44 (Glu-44) interacts with K(+). Glu-57 and Gln-100 together coordinate L-methionine. Residues 100 to 110 are flexible loop; the sequence is QSPEIAQGVDR. Residues 165 to 167, Asp-240, 246 to 247, Ala-263, and Lys-267 each bind ATP; these read DAK and RK. Asp-240 is a binding site for L-methionine. Lys-271 provides a ligand contact to L-methionine.

The protein belongs to the AdoMet synthase family. As to quaternary structure, homotetramer; dimer of dimers. The cofactor is Mg(2+). It depends on K(+) as a cofactor.

It is found in the cytoplasm. It catalyses the reaction L-methionine + ATP + H2O = S-adenosyl-L-methionine + phosphate + diphosphate. It participates in amino-acid biosynthesis; S-adenosyl-L-methionine biosynthesis; S-adenosyl-L-methionine from L-methionine: step 1/1. Catalyzes the formation of S-adenosylmethionine (AdoMet) from methionine and ATP. The overall synthetic reaction is composed of two sequential steps, AdoMet formation and the subsequent tripolyphosphate hydrolysis which occurs prior to release of AdoMet from the enzyme. This Acinetobacter baumannii (strain AYE) protein is S-adenosylmethionine synthase.